Reading from the N-terminus, the 398-residue chain is Subtilisin-like protease CPC735_015300 (398 aa).

The N-terminal stretch at 1-19 is a signal peptide; sequence MGFIKTLSLSLAAASAANA. Positions 20–116 are excised as a propeptide; sequence AKILSPSRPD…IEHDHVVRLT (97 aa). In terms of domain architecture, Inhibitor I9 spans 35–115; that stretch reads QYIVVMKDGV…FIEHDHVVRL (81 aa). The region spanning 126–398 is the Peptidase S8 domain; it reads TWGLGRVSHQ…NKLTYNGNGQ (273 aa). Catalysis depends on charge relay system residues Asp-158 and His-189. The N-linked (GlcNAc...) asparagine glycan is linked to Asn-250. Catalysis depends on Ser-344, which acts as the Charge relay system. An N-linked (GlcNAc...) asparagine glycan is attached at Asn-362.

This sequence belongs to the peptidase S8 family.

The protein localises to the secreted. Its function is as follows. Secreted subtilisin-like serine protease with keratinolytic activity that contributes to pathogenicity. The chain is Subtilisin-like protease CPC735_015300 from Coccidioides posadasii (strain C735) (Valley fever fungus).